The chain runs to 1794 residues: Protein TIC 214 (1794 aa).

Helical transmembrane passes span 19–39, 68–88, 91–111, 133–153, 176–196, and 227–247; these read IINS…FSIG, FIAG…HLAL, PHTI…WNNH, VFLN…SSML, VGWL…LVWI, and IFSI…PSPI.

It belongs to the TIC214 family. As to quaternary structure, part of the Tic complex.

It localises to the plastid. The protein resides in the chloroplast inner membrane. In terms of biological role, involved in protein precursor import into chloroplasts. May be part of an intermediate translocation complex acting as a protein-conducting channel at the inner envelope. The chain is Protein TIC 214 from Olimarabidopsis pumila (Dwarf rocket).